The primary structure comprises 583 residues: Glycine--tRNA ligase (583 aa).

Substrate contacts are provided by Arg100 and Glu166. Residues 198-200 (RNE), 208-213 (VRLREF), 328-329 (EV), and 443-446 (GTDR) each bind ATP. Position 213 to 217 (213 to 217 (FTIME)) interacts with substrate. 439-443 (EPSFG) contributes to the substrate binding site.

Belongs to the class-II aminoacyl-tRNA synthetase family.

It localises to the cytoplasm. The enzyme catalyses tRNA(Gly) + glycine + ATP = glycyl-tRNA(Gly) + AMP + diphosphate. Catalyzes the attachment of glycine to tRNA(Gly). The polypeptide is Glycine--tRNA ligase (Aeropyrum pernix (strain ATCC 700893 / DSM 11879 / JCM 9820 / NBRC 100138 / K1)).